Here is a 368-residue protein sequence, read N- to C-terminus: Metacaspase-6 (368 aa).

Active-site residues include His86 and Cys139. Cys139 bears the S-nitrosocysteine mark. Residues 153 to 174 (GESTKKKKDSGDSSTINKETEA) form a disordered region.

Belongs to the peptidase C14B family. Post-translationally, proteolytically processed; by an autocatalytic mechanism. Expressed in roots and flower buds.

In Arabidopsis thaliana (Mouse-ear cress), this protein is Metacaspase-6 (AMC6).